We begin with the raw amino-acid sequence, 250 residues long: Capsid protein (250 aa).

Residues 1-31 (MPKRDAPWLMAGTSKVSRSGNYSPSGGMGSK) are disordered. The short motif at 3–19 (KRDAPWLMAGTSKVSRS) is the Bipartite nuclear localization signal element. Over residues 14–31 (SKVSRSGNYSPSGGMGSK) the composition is skewed to polar residues. The Nuclear localization signal motif lies at 34-48 (KANAWVNRPMYRKPR). A zinc finger spans residues 53-70 (YKSPDVPKGCEGPCKVQS). Residues 95 to 116 (ITHRVGKRFCVKSVYILGKIWM) carry the Nuclear export signal motif. A Bipartite nuclear localization signal motif is present at residues 194 to 241 (RRFWKVNNHVVYNHQEAGKYENHTENALLLYMACTHASNPVYATLKIR).

Belongs to the geminiviridae capsid protein family. In terms of assembly, homomultimer. Binds to single-stranded and double-stranded viral DNA. Interacts (via nuclear localization signals) with host importin alpha-1a.

It is found in the virion. The protein localises to the host nucleus. Its function is as follows. Encapsidates the viral DNA into characteristic twinned ('geminate') particles. Binds the genomic viral ssDNA and shuttles it into and out of the cell nucleus. The CP of bipartite geminiviruses is not required for cell-to-cell or systemic movement. This chain is Capsid protein, found in Bean golden yellow mosaic virus (isolate Puerto Rico) (BGYMV).